The chain runs to 199 residues: MSNMEKHLFNLKFAAKELSRSAKKCDKEEKAEKAKIKKAIQKGNMEVARIHAENAIRQKNQAVNFLRMSARVDAVAARVQTAVTMGKVTKSMAGVVKSMDATLKTMNLEKISALMDKFEHQFETLDVQTQQMEDTMSSTTTLTTPQNQVDMLLQEMADEAGLDLNMELPQGQTGSVGTSVASAEQDELSQRLARLRDQV.

Positions 26–48 (DKEEKAEKAKIKKAIQKGNMEVA) form a coiled coil. Positions 132 to 156 (MEDTMSSTTTLTTPQNQVDMLLQEM) are interaction with IST1. Residues 167–199 (ELPQGQTGSVGTSVASAEQDELSQRLARLRDQV) form a disordered region. Polar residues predominate over residues 170–182 (QGQTGSVGTSVAS). Residues 174–199 (GSVGTSVASAEQDELSQRLARLRDQV) are interaction with SPAST. A coiled-coil region spans residues 178-199 (TSVASAEQDELSQRLARLRDQV). Positions 180 to 196 (VASAEQDELSQRLARLR) are interaction with VPS4A, MITD1 and STAMBP. Residues 180–199 (VASAEQDELSQRLARLRDQV) are interaction with VTA1. The tract at residues 183–199 (AEQDELSQRLARLRDQV) is interaction with VPS4B. The MIT-interacting motif signature appears at 186–196 (DELSQRLARLR).

The protein belongs to the SNF7 family. Probable peripherally associated component of the endosomal sorting required for transport complex III (ESCRT-III). ESCRT-III components are thought to multimerize to form a flat lattice on the perimeter membrane of the endosome. Several assembly forms of ESCRT-III may exist that interact and act sequentially. Interacts with CHMP1A. Interacts with VTA1; the interaction probably involves the open conformation of CHMP1B. Interacts with CHMP2A. Interacts with VPS4A; the interaction is direct. Interacts with VPS4B; the interaction is direct. Interacts with SPAST (via MIT domain); the interaction is direct. Interacts with IST1. Interacts with MITD1. Interacts with STAMBP. Widely expressed. Expressed in pancreas, kidney, skeletal muscle, liver, lung, placenta and brain.

The protein localises to the cytoplasm. It is found in the cytosol. The protein resides in the endosome. Its subcellular location is the late endosome membrane. Functionally, probable peripherally associated component of the endosomal sorting required for transport complex III (ESCRT-III) which is involved in multivesicular bodies (MVBs) formation and sorting of endosomal cargo proteins into MVBs. MVBs contain intraluminal vesicles (ILVs) that are generated by invagination and scission from the limiting membrane of the endosome and mostly are delivered to lysosomes enabling degradation of membrane proteins, such as stimulated growth factor receptors, lysosomal enzymes and lipids. The MVB pathway appears to require the sequential function of ESCRT-O, -I,-II and -III complexes. ESCRT-III proteins mostly dissociate from the invaginating membrane before the ILV is released. The ESCRT machinery also functions in topologically equivalent membrane fission events, such as the terminal stages of cytokinesis and the budding of enveloped viruses (HIV-1 and other lentiviruses). ESCRT-III proteins are believed to mediate the necessary vesicle extrusion and/or membrane fission activities, possibly in conjunction with the AAA ATPase VPS4. Involved in cytokinesis. Involved in recruiting VPS4A and/or VPS4B and SPAST to the midbody of dividing cells. Involved in HIV-1 p6- and p9-dependent virus release. In Homo sapiens (Human), this protein is Charged multivesicular body protein 1b (CHMP1B).